The sequence spans 423 residues: Histidine--tRNA ligase (423 aa).

The protein belongs to the class-II aminoacyl-tRNA synthetase family. In terms of assembly, homodimer.

The protein resides in the cytoplasm. The catalysed reaction is tRNA(His) + L-histidine + ATP = L-histidyl-tRNA(His) + AMP + diphosphate + H(+). The chain is Histidine--tRNA ligase from Haemophilus influenzae (strain 86-028NP).